The sequence spans 172 residues: Signal peptidase complex catalytic subunit sec11 (172 aa).

Residues 1-14 are Cytoplasmic-facing; the sequence is MLSFLQNPRQAAAQ. The helical; Signal-anchor for type II membrane protein transmembrane segment at 15–35 threads the bilayer; that stretch reads VLNFALILSTAFMMWKGLSVA. At 36 to 172 the chain is on the lumenal side; it reads SDSPSPIVVV…MGLVVVLQRE (137 aa). Active-site charge relay system residues include Ser49, His90, and Asp115. A C-terminal short (CTS) helix region spans residues 158 to 169; the sequence is VMLGMMGLVVVL.

It belongs to the peptidase S26B family. Component of the signal peptidase complex (SPC) composed of a catalytic subunit SEC11 and three accessory subunits SPC1, SPC2 and SPC3. The complex induces a local thinning of the ER membrane which is used to measure the length of the signal peptide (SP) h-region of protein substrates. This ensures the selectivity of the complex towards h-regions shorter than 18-20 amino acids. SPC associates with the translocon complex.

The protein resides in the endoplasmic reticulum membrane. It carries out the reaction Cleavage of hydrophobic, N-terminal signal or leader sequences from secreted and periplasmic proteins.. Functionally, catalytic component of the signal peptidase complex (SPC) which catalyzes the cleavage of N-terminal signal sequences from nascent proteins as they are translocated into the lumen of the endoplasmic reticulum. Specifically cleaves N-terminal signal peptides that contain a hydrophobic alpha-helix (h-region) shorter than 18-20 amino acids. This is Signal peptidase complex catalytic subunit sec11 (sec11) from Sclerotinia sclerotiorum (strain ATCC 18683 / 1980 / Ss-1) (White mold).